The primary structure comprises 611 residues: Autophagy-related protein 22-2 (611 aa).

The tract at residues 1–24 is disordered; it reads MRADDNPSARSLHAQFPGDDTRPT. A helical membrane pass occupies residues 35–55; the sequence is YGWAAEVFTVCAMGSFLPITL. N78 carries an N-linked (GlcNAc...) asparagine glycan. Helical transmembrane passes span 116–136, 151–171, and 175–195; these read TASFAMYTFSVSVFVQAVLII, LLVAFAVIGSVCTMLFLSVVP, and IVGALFAIVANTCFGASFVLL. A glycan (N-linked (GlcNAc...) asparagine) is linked at N221. The next 2 helical transmembrane spans lie at 286 to 306 and 316 to 336; these read IGIGYIGAVILQIICILVIIA and LVLFLIGLWWFVFTIPAALWL. The N-linked (GlcNAc...) asparagine glycan is linked to N353. The next 6 helical transmembrane spans lie at 380–400, 414–434, 449–469, 483–503, 521–541, and 551–571; these read ILLFLTAWFLLSDGIATVSGT, AALGLINVVTMMAGVFGAFSW, IIACILLFELIPIYGLLGFVP, WEMFPLGIVYGLVMGGLSSYC, ALYAITDKGSSIFGPAIVGLI, and AFVFLAVLIFLPLPLMLLVDV.

Belongs to the ATG22 family.

It localises to the vacuole membrane. Functionally, vacuolar effluxer which mediate the efflux of amino acids resulting from autophagic degradation. The release of autophagic amino acids allows the maintenance of protein synthesis and viability during nitrogen starvation. The chain is Autophagy-related protein 22-2 (atg22-2) from Aspergillus clavatus (strain ATCC 1007 / CBS 513.65 / DSM 816 / NCTC 3887 / NRRL 1 / QM 1276 / 107).